We begin with the raw amino-acid sequence, 262 residues long: LysM and putative peptidoglycan-binding domain-containing protein 3 (262 aa).

Topologically, residues 1–218 (MSGRIPNHGY…PYHGADWSLG (218 aa)) are extracellular. Residues 70-114 (ISRDICEGDTLNSIALQYCCTVADLKRANNFLNEQDFFALRTIKI) form the LysM domain. Residues 219–239 (WWTAVAIMVFVGIITPLFYFL) form a helical membrane-spanning segment. Residues 240-262 (YYEVLMKVNTSHTLNSIEKSGPS) are Cytoplasmic-facing.

Its subcellular location is the cell membrane. It is found in the golgi apparatus. Essential for Golgi structural integrity. The polypeptide is LysM and putative peptidoglycan-binding domain-containing protein 3 (lysmd3) (Xenopus tropicalis (Western clawed frog)).